The primary structure comprises 414 residues: Glucose-1-phosphate adenylyltransferase (414 aa).

Residues Gly-164, 181–182 (EK), and Ser-199 contribute to the alpha-D-glucose 1-phosphate site.

Belongs to the bacterial/plant glucose-1-phosphate adenylyltransferase family. Homotetramer.

It carries out the reaction alpha-D-glucose 1-phosphate + ATP + H(+) = ADP-alpha-D-glucose + diphosphate. It functions in the pathway glycan biosynthesis; glycogen biosynthesis. Its function is as follows. Involved in the biosynthesis of ADP-glucose, a building block required for the elongation reactions to produce glycogen. Catalyzes the reaction between ATP and alpha-D-glucose 1-phosphate (G1P) to produce pyrophosphate and ADP-Glc. The chain is Glucose-1-phosphate adenylyltransferase from Kocuria rhizophila (strain ATCC 9341 / DSM 348 / NBRC 103217 / DC2201).